An 87-amino-acid chain; its full sequence is Small ribosomal subunit protein bS16 (87 aa).

This sequence belongs to the bacterial ribosomal protein bS16 family.

The chain is Small ribosomal subunit protein bS16 from Variovorax paradoxus (strain S110).